Consider the following 748-residue polypeptide: Catalase-peroxidase (748 aa).

The segment at residues 92–238 is a cross-link (tryptophyl-tyrosyl-methioninium (Trp-Tyr) (with M-264)); it reads WHSAGTYRTG…LAAVQMGLIY (147 aa). The active-site Proton acceptor is His93. The tryptophyl-tyrosyl-methioninium (Tyr-Met) (with W-92) cross-link spans 238-264; the sequence is YVNPEGPDGNPDPLLAAKDIRDTFGRM. His279 contributes to the heme b binding site.

This sequence belongs to the peroxidase family. Peroxidase/catalase subfamily. Homodimer or homotetramer. Heme b is required as a cofactor. Post-translationally, formation of the three residue Trp-Tyr-Met cross-link is important for the catalase, but not the peroxidase activity of the enzyme.

It catalyses the reaction H2O2 + AH2 = A + 2 H2O. It carries out the reaction 2 H2O2 = O2 + 2 H2O. In terms of biological role, bifunctional enzyme with both catalase and broad-spectrum peroxidase activity. The polypeptide is Catalase-peroxidase (Xanthomonas campestris pv. campestris (strain 8004)).